The following is a 200-amino-acid chain: Coiled-coil domain-containing protein 85B (200 aa).

The stretch at 57 to 84 (LQGHLLEIRELKVINQRLQEENQELRDL) forms a coiled coil. The span at 178–188 (DGSSSTGSVGS) shows a compositional bias: low complexity. The segment at 178 to 200 (DGSSSTGSVGSPDQLHLVCSPDD) is disordered.

This sequence belongs to the CCDC85 family.

Its subcellular location is the nucleus. The protein localises to the cytoplasm. It localises to the cytoskeleton. The protein resides in the microtubule organizing center. It is found in the centrosome. Its subcellular location is the cell junction. The protein localises to the adherens junction. Functionally, functions as a transcriptional repressor. May inhibit the activity of CTNNB1 in a TP53-dependent manner and thus regulate cell growth. May function in adipocyte differentiation, negatively regulating mitotic clonal expansion. Plays a role in cell-cell adhesion and epithelium development through its interaction with proteins of the beta-catenin family. The sequence is that of Coiled-coil domain-containing protein 85B (ccdc85b) from Danio rerio (Zebrafish).